We begin with the raw amino-acid sequence, 217 residues long: 3,4-dihydroxy-2-butanone 4-phosphate synthase (217 aa).

Residues 37 to 38 (RE), Asp42, 150 to 154 (RGGHT), and Glu174 contribute to the D-ribulose 5-phosphate site. Glu38 contacts Mg(2+). His153 contributes to the Mg(2+) binding site.

It belongs to the DHBP synthase family. As to quaternary structure, homodimer. Mg(2+) is required as a cofactor. It depends on Mn(2+) as a cofactor.

It catalyses the reaction D-ribulose 5-phosphate = (2S)-2-hydroxy-3-oxobutyl phosphate + formate + H(+). It participates in cofactor biosynthesis; riboflavin biosynthesis; 2-hydroxy-3-oxobutyl phosphate from D-ribulose 5-phosphate: step 1/1. In terms of biological role, catalyzes the conversion of D-ribulose 5-phosphate to formate and 3,4-dihydroxy-2-butanone 4-phosphate. The polypeptide is 3,4-dihydroxy-2-butanone 4-phosphate synthase (Salmonella arizonae (strain ATCC BAA-731 / CDC346-86 / RSK2980)).